The following is a 218-amino-acid chain: Molybdenum cofactor guanylyltransferase (218 aa).

GTP contacts are provided by residues 16-18 (LAG), lysine 28, asparagine 56, aspartate 74, and aspartate 109. Mg(2+) is bound at residue aspartate 109.

Belongs to the MobA family. Monomer. Mg(2+) is required as a cofactor.

It is found in the cytoplasm. The enzyme catalyses Mo-molybdopterin + GTP + H(+) = Mo-molybdopterin guanine dinucleotide + diphosphate. Its function is as follows. Transfers a GMP moiety from GTP to Mo-molybdopterin (Mo-MPT) cofactor (Moco or molybdenum cofactor) to form Mo-molybdopterin guanine dinucleotide (Mo-MGD) cofactor. The protein is Molybdenum cofactor guanylyltransferase of Sinorhizobium fredii (strain NBRC 101917 / NGR234).